Here is a 205-residue protein sequence, read N- to C-terminus: Thymidine kinase (205 aa).

ATP is bound by residues 9–16 (SAMNAGKS) and 87–90 (DECQ). E88 serves as the catalytic Proton acceptor. Positions 145, 147, 182, and 185 each coordinate Zn(2+).

It belongs to the thymidine kinase family. As to quaternary structure, homotetramer.

Its subcellular location is the cytoplasm. The enzyme catalyses thymidine + ATP = dTMP + ADP + H(+). Allosteric enzyme which is feedback inhibited by dTTP and activated by a number of dNDP and dNTP. Phosphorylates both thymidine and deoxyuridine. This chain is Thymidine kinase, found in Escherichia coli O157:H7.